The sequence spans 206 residues: Small ribosomal subunit protein uS4 (206 aa).

Residues T96–K156 form the S4 RNA-binding domain.

It belongs to the universal ribosomal protein uS4 family. In terms of assembly, part of the 30S ribosomal subunit. Contacts protein S5. The interaction surface between S4 and S5 is involved in control of translational fidelity.

Functionally, one of the primary rRNA binding proteins, it binds directly to 16S rRNA where it nucleates assembly of the body of the 30S subunit. With S5 and S12 plays an important role in translational accuracy. This Shewanella sp. (strain ANA-3) protein is Small ribosomal subunit protein uS4.